Here is a 1032-residue protein sequence, read N- to C-terminus: Connector enhancer of kinase suppressor of ras 2 (1032 aa).

The SAM domain occupies 11–76 (WSPSQVVDWM…LEAVDLLCAL (66 aa)). Residue Ser12 is modified to Phosphoserine. The CRIC domain occupies 84 to 178 (NLKTLSHKLN…TIVQQDCTVY (95 aa)). In terms of domain architecture, PDZ spans 215-297 (VIQLANIKPS…GVILTLKKRP (83 aa)). The span at 324–340 (RSPTSSVATPSSTISTP) shows a compositional bias: low complexity. Positions 324-349 (RSPTSSVATPSSTISTPTKRDSSALQ) are disordered. The DUF1170 domain maps to 332–515 (TPSSTISTPT…PTHYSLLPSL (184 aa)). Phosphoserine is present on residues Ser338 and Ser390. The interval 480–509 (EEYMFQRNSKKDTGKKSKKKGDKSTSPTHY) is disordered. One can recognise a PH domain in the interval 570–669 (RGDCEGWLWK…WLNRINMLTA (100 aa)). The tract at residues 682–766 (DYWSESDKEE…PIRKTASQRR (85 aa)) is disordered. Phosphotyrosine is present on Tyr683. The segment covering 683–693 (YWSESDKEEAD) has biased composition (acidic residues). A phosphoserine mark is found at Ser685 and Ser687. Residues 701 to 714 (DSPPPPYDTYPRPP) are compositionally biased toward pro residues. The segment covering 730–740 (LSSTETSQSQS) has biased composition (low complexity). Phosphoserine occurs at positions 756 and 767. Residues 866–900 (DPQDDIQPPEVEEEEEEEEEEAAGENIGEKNENRE) are disordered. Positions 874 to 917 (PEVEEEEEEEEEEAAGENIGEKNENREEKLGDSLQDLYRALEEA) form a coiled coil. Residues 875-888 (EVEEEEEEEEEEAA) show a composition bias toward acidic residues. A Phosphoserine modification is found at Ser906.

Belongs to the CNKSR family. As to quaternary structure, interacts with RAF1, RAB2L and RAL GTPase proteins. Interacts with DLG4 and AIP1. Phosphorylated on tyrosine. In terms of tissue distribution, expressed in neurons and localized in the cell body and neurites.

Its subcellular location is the cytoplasm. The protein localises to the membrane. Functionally, may function as an adapter protein or regulator of Ras signaling pathways, in synaptic junctions. The polypeptide is Connector enhancer of kinase suppressor of ras 2 (Cnksr2) (Rattus norvegicus (Rat)).